Here is a 349-residue protein sequence, read N- to C-terminus: UDP-3-O-acylglucosamine N-acyltransferase (349 aa).

Histidine 243 (proton acceptor) is an active-site residue.

This sequence belongs to the transferase hexapeptide repeat family. LpxD subfamily. In terms of assembly, homotrimer.

The enzyme catalyses a UDP-3-O-[(3R)-3-hydroxyacyl]-alpha-D-glucosamine + a (3R)-hydroxyacyl-[ACP] = a UDP-2-N,3-O-bis[(3R)-3-hydroxyacyl]-alpha-D-glucosamine + holo-[ACP] + H(+). It participates in bacterial outer membrane biogenesis; LPS lipid A biosynthesis. Its function is as follows. Catalyzes the N-acylation of UDP-3-O-acylglucosamine using 3-hydroxyacyl-ACP as the acyl donor. Is involved in the biosynthesis of lipid A, a phosphorylated glycolipid that anchors the lipopolysaccharide to the outer membrane of the cell. This is UDP-3-O-acylglucosamine N-acyltransferase from Myxococcus xanthus (strain DK1622).